We begin with the raw amino-acid sequence, 231 residues long: Ribose-5-phosphate isomerase A (231 aa).

Residues 40-43, 93-96, and 106-109 contribute to the substrate site; these read TGST, DGAD, and KGGG. Catalysis depends on Glu115, which acts as the Proton acceptor. Lys133 is a substrate binding site.

Belongs to the ribose 5-phosphate isomerase family. Homodimer.

It carries out the reaction aldehydo-D-ribose 5-phosphate = D-ribulose 5-phosphate. It functions in the pathway carbohydrate degradation; pentose phosphate pathway; D-ribose 5-phosphate from D-ribulose 5-phosphate (non-oxidative stage): step 1/1. Its function is as follows. Catalyzes the reversible conversion of ribose-5-phosphate to ribulose 5-phosphate. The protein is Ribose-5-phosphate isomerase A of Escherichia coli O6:K15:H31 (strain 536 / UPEC).